Reading from the N-terminus, the 129-residue chain is Dynein 14 kDa light chain, flagellar outer arm (129 aa).

The Thioredoxin domain occupies 2–109 (AFITEIANEA…LNRIVTELSG (108 aa)). Cysteines 34 and 37 form a disulfide. The disordered stretch occupies residues 107-129 (LSGKNPPPAAPAAAPAAPAAEAS). Positions 117–129 (PAAAPAAPAAEAS) are enriched in low complexity.

In terms of assembly, consists of at least 3 heavy chains (alpha, beta and gamma), 2 intermediate chains and 8 light chains.

It localises to the cell projection. Its subcellular location is the cilium. The protein resides in the flagellum. It is found in the cytoplasm. The protein localises to the cytoskeleton. It localises to the flagellum axoneme. Its function is as follows. May be involved in regulating the redox state of functionally important thiol groups within dynein. The sequence is that of Dynein 14 kDa light chain, flagellar outer arm from Chlamydomonas reinhardtii (Chlamydomonas smithii).